The chain runs to 533 residues: Subtilisin-like serine protease pepC (533 aa).

Positions 1–16 are cleaved as a signal peptide; sequence MKGILGLSLLPLLTAA. The region spanning 43 to 136 is the Inhibitor I9 domain; sequence SYIVVFKKHV…IERDSEVHTM (94 aa). Residues 145-450 enclose the Peptidase S8 domain; sequence PWGLARISHR…VGIYKRNELT (306 aa). Catalysis depends on charge relay system residues aspartate 181 and histidine 213. Residue asparagine 283 is glycosylated (N-linked (GlcNAc...) asparagine). A disulfide bridge links cysteine 320 with cysteine 351. Serine 379 (charge relay system) is an active-site residue. Residue asparagine 435 is glycosylated (N-linked (GlcNAc...) asparagine). The segment covering 496-513 has biased composition (polar residues); that stretch reads KSCSPRSLVPSTARSRMP. Residues 496 to 519 are disordered; that stretch reads KSCSPRSLVPSTARSRMPSSHRSE.

Belongs to the peptidase S8 family.

The sequence is that of Subtilisin-like serine protease pepC (pepC) from Aspergillus niger.